Here is an 89-residue protein sequence, read N- to C-terminus: Mu-theraphotoxin-Phlo1a (89 aa).

The N-terminal stretch at 1–22 (MKVSVLITLAVLGVMFVWTSAA) is a signal peptide. The propeptide occupies 23-52 (EQEDHGSDRRDSPALLKNLLGEEVFQSEER). 3 disulfide bridges follow: Cys54/Cys68, Cys61/Cys73, and Cys67/Cys81. At Ile87 the chain carries Isoleucine amide.

It belongs to the neurotoxin 10 (Hwtx-1) family. 39 (Jztx-34) subfamily. As to expression, expressed by the venom gland.

The protein resides in the secreted. Functionally, gating-modifier toxin that inhibits voltage-gated sodium channel Nav by shifting the threshold for channel activation to more positive potentials. This toxin moderately inhibits human Nav1.7/SCN9A (IC(50)=459 nM) and weakly inhibits hNav1.2/SCN2A and hNav1.5/SCN5A (&lt;20% inhibition at 1 uM peptide). Inhibition of Nav1.7 is voltage-dependent, with lower inhibition at more positive test pulses. In Phlogius sp. (Tarantula spider), this protein is Mu-theraphotoxin-Phlo1a.